We begin with the raw amino-acid sequence, 173 residues long: dCTP deaminase, dUMP-forming (173 aa).

Residues 93–98 (RSSIGR), D111, 119–121 (TLE), Q138, and Y151 each bind dCTP. E121 acts as the Proton donor/acceptor in catalysis.

It belongs to the dCTP deaminase family. In terms of assembly, homotrimer.

It carries out the reaction dCTP + 2 H2O = dUMP + NH4(+) + diphosphate. The protein operates within pyrimidine metabolism; dUMP biosynthesis; dUMP from dCTP: step 1/1. Its function is as follows. Bifunctional enzyme that catalyzes both the deamination of dCTP to dUTP and the hydrolysis of dUTP to dUMP without releasing the toxic dUTP intermediate. The sequence is that of dCTP deaminase, dUMP-forming from Cytophaga hutchinsonii (strain ATCC 33406 / DSM 1761 / CIP 103989 / NBRC 15051 / NCIMB 9469 / D465).